The primary structure comprises 251 residues: GTP cyclohydrolase 1 type 2 homolog (251 aa).

His-64, His-65, Asp-102, His-219, and Glu-223 together coordinate a divalent metal cation.

The protein belongs to the GTP cyclohydrolase I type 2/NIF3 family. In terms of assembly, homohexamer.

This Chlamydia muridarum (strain MoPn / Nigg) protein is GTP cyclohydrolase 1 type 2 homolog.